Consider the following 101-residue polypeptide: Glutaredoxin-1 (101 aa).

Residues 3–101 (DSFVQSKLRD…MMLRQIGALV (99 aa)) form the Glutaredoxin domain. Residues cysteine 23 and cysteine 26 are joined by a disulfide bond.

Belongs to the glutaredoxin family.

The protein resides in the cytoplasm. Its function is as follows. Has a glutathione-disulfide oxidoreductase activity in the presence of NADPH and glutathione reductase. Reduces low molecular weight disulfides and proteins. The sequence is that of Glutaredoxin-1 (GLRX) from Gallus gallus (Chicken).